The chain runs to 595 residues: Actin-histidine N-methyltransferase (595 aa).

Positions 1 to 22 are disordered; that stretch reads MGKKSRVKTQKSGTGATATVSP. A compositionally biased stretch (polar residues) spans 10-20; it reads QKSGTGATATV. S-adenosyl-L-methionine contacts are provided by residues Arg75, 104–106, Arg254, 275–279, and 325–327; these read EGF, DMCNH, and SGF. Residues 94–314 enclose the SET domain; sequence EGFEMVNFKE…AGEQIYIFYG (221 aa). The residue at position 513 (Ser513) is a Phosphoserine. Residues 549–573 are compositionally biased toward polar residues; the sequence is ENGLVNGENSIPNGTRSENENLNQE. A disordered region spans residues 549-595; that stretch reads ENGLVNGENSIPNGTRSENENLNQEGSKRAVEDAKGSSSDSTDEVKE. A compositionally biased stretch (basic and acidic residues) spans 574–583; the sequence is GSKRAVEDAK.

Belongs to the class V-like SAM-binding methyltransferase superfamily. SETD3 actin-histidine methyltransferase family. As to quaternary structure, interacts with MYOD1. Phosphorylated by GSK3B, which is required for recognition by the SCF(FBXW7) complex and subsequent degradation. Post-translationally, ubiquitinated by the SCF(FBXW7) complex following phosphorylation by GSK3B, leading to its degradation by the proteasome.

It localises to the cytoplasm. The protein resides in the nucleus. The enzyme catalyses L-histidyl-[protein] + S-adenosyl-L-methionine = N(tele)-methyl-L-histidyl-[protein] + S-adenosyl-L-homocysteine + H(+). Functionally, protein-histidine N-methyltransferase that specifically mediates 3-methylhistidine (tele-methylhistidine) methylation of actin at 'His-73'. Histidine methylation of actin is required for smooth muscle contraction of the laboring uterus during delivery. Does not have protein-lysine N-methyltransferase activity and probably only catalyzes histidine methylation of actin. The chain is Actin-histidine N-methyltransferase from Plecturocebus moloch (Dusky titi monkey).